Reading from the N-terminus, the 103-residue chain is Large ribosomal subunit protein bL21 (103 aa).

This sequence belongs to the bacterial ribosomal protein bL21 family. Part of the 50S ribosomal subunit. Contacts protein L20.

Functionally, this protein binds to 23S rRNA in the presence of protein L20. In Clostridium botulinum (strain Alaska E43 / Type E3), this protein is Large ribosomal subunit protein bL21.